The following is a 346-amino-acid chain: Dihydroorotase (346 aa).

His-13 and His-15 together coordinate Zn(2+). Substrate-binding positions include 15 to 17 (HLR) and Asn-41. Residues Lys-99, His-136, and His-174 each coordinate Zn(2+). N6-carboxylysine is present on Lys-99. Residue His-136 participates in substrate binding. A substrate-binding site is contributed by Leu-219. Asp-247 lines the Zn(2+) pocket. Residue Asp-247 is part of the active site. Positions 251 and 263 each coordinate substrate.

The protein belongs to the metallo-dependent hydrolases superfamily. DHOase family. Class II DHOase subfamily. In terms of assembly, homodimer. The cofactor is Zn(2+).

The enzyme catalyses (S)-dihydroorotate + H2O = N-carbamoyl-L-aspartate + H(+). The protein operates within pyrimidine metabolism; UMP biosynthesis via de novo pathway; (S)-dihydroorotate from bicarbonate: step 3/3. Its function is as follows. Catalyzes the reversible cyclization of carbamoyl aspartate to dihydroorotate. The sequence is that of Dihydroorotase from Picosynechococcus sp. (strain ATCC 27264 / PCC 7002 / PR-6) (Agmenellum quadruplicatum).